Reading from the N-terminus, the 430-residue chain is Nitroalkane oxidase (430 aa).

Residues 132–135, 140–142, 170–172, arginine 301, glutamine 311, 372–376, and 397–401 contribute to the FAD site; these read LVFS, VAN, WAT, NAVGI, and IFDGG. Aspartate 399 functions as the Proton acceptor in the catalytic mechanism.

Belongs to the acyl-CoA dehydrogenase family. Homotetramer. Requires FAD as cofactor.

It catalyses the reaction a primary nitroalkane + O2 + H2O = an aldehyde + nitrite + H2O2 + H(+). The enzyme catalyses a secondary nitroalkane + O2 + H2O = a ketone + nitrite + H2O2 + H(+). In terms of biological role, nitroalkane oxidase (NAO) catalyzes the oxidation of nitroalkanes to the corresponding aldehydes or ketones with the release of nitrite and the consumption of molecular oxygen to yield hydrogen peroxide. NAO is unusual, since it catalyzes substrate oxidation by removing a substrate proton to form a carbanion intermediate. Prefers longer nitroalkanes, with 1-nitrohexane having the highest activity. This chain is Nitroalkane oxidase, found in Podospora anserina (strain S / ATCC MYA-4624 / DSM 980 / FGSC 10383) (Pleurage anserina).